A 481-amino-acid polypeptide reads, in one-letter code: Dihydrolipoyl dehydrogenase (481 aa).

FAD is bound by residues 34–42 (EREHMGGIC) and K51. Residues C42 and C47 are joined by a disulfide bond. NAD(+)-binding positions include 195-199 (GSGAI), E218, and 284-287 (AVGV). Residues D326 and A334 each contribute to the FAD site. The Proton acceptor role is filled by H460.

Belongs to the class-I pyridine nucleotide-disulfide oxidoreductase family. In terms of assembly, homodimer. FAD is required as a cofactor.

Its subcellular location is the cytoplasm. The catalysed reaction is N(6)-[(R)-dihydrolipoyl]-L-lysyl-[protein] + NAD(+) = N(6)-[(R)-lipoyl]-L-lysyl-[protein] + NADH + H(+). Lipoamide dehydrogenase is a component of the alpha-ketoacid dehydrogenase complexes. In Rhizobium etli (strain ATCC 51251 / DSM 11541 / JCM 21823 / NBRC 15573 / CFN 42), this protein is Dihydrolipoyl dehydrogenase (lpdA).